The following is a 201-amino-acid chain: Flagellin B1 (201 aa).

Residues 1–11 (MFEQNDDRDRG) constitute a propeptide that is removed on maturation.

It belongs to the archaeal flagellin family.

It localises to the archaeal flagellum. Flagellin is the subunit protein which polymerizes to form the filaments of archaeal flagella. This is Flagellin B1 (flaB1) from Natrialba magadii (strain ATCC 43099 / DSM 3394 / CCM 3739 / CIP 104546 / IAM 13178 / JCM 8861 / NBRC 102185 / NCIMB 2190 / MS3) (Natronobacterium magadii).